Reading from the N-terminus, the 308-residue chain is Aspartate carbamoyltransferase catalytic subunit (308 aa).

R55 and T56 together coordinate carbamoyl phosphate. An L-aspartate-binding site is contributed by K83. The carbamoyl phosphate site is built by R105, H133, and Q136. Positions 166 and 220 each coordinate L-aspartate. Carbamoyl phosphate contacts are provided by G261 and P262.

Belongs to the aspartate/ornithine carbamoyltransferase superfamily. ATCase family. Heterododecamer (2C3:3R2) of six catalytic PyrB chains organized as two trimers (C3), and six regulatory PyrI chains organized as three dimers (R2).

The catalysed reaction is carbamoyl phosphate + L-aspartate = N-carbamoyl-L-aspartate + phosphate + H(+). Its pathway is pyrimidine metabolism; UMP biosynthesis via de novo pathway; (S)-dihydroorotate from bicarbonate: step 2/3. In terms of biological role, catalyzes the condensation of carbamoyl phosphate and aspartate to form carbamoyl aspartate and inorganic phosphate, the committed step in the de novo pyrimidine nucleotide biosynthesis pathway. The chain is Aspartate carbamoyltransferase catalytic subunit from Chlorobaculum tepidum (strain ATCC 49652 / DSM 12025 / NBRC 103806 / TLS) (Chlorobium tepidum).